The primary structure comprises 168 residues: G/U mismatch-specific DNA glycosylase (168 aa).

It belongs to the uracil-DNA glycosylase (UDG) superfamily. TDG/mug family. As to quaternary structure, binds DNA as a monomer.

It localises to the cytoplasm. The enzyme catalyses Specifically hydrolyzes mismatched double-stranded DNA and polynucleotides, releasing free uracil.. Excises ethenocytosine and uracil, which can arise by alkylation or deamination of cytosine, respectively, from the corresponding mispairs with guanine in ds-DNA. It is capable of hydrolyzing the carbon-nitrogen bond between the sugar-phosphate backbone of the DNA and the mispaired base. The complementary strand guanine functions in substrate recognition. Required for DNA damage lesion repair in stationary-phase cells. The sequence is that of G/U mismatch-specific DNA glycosylase from Salmonella gallinarum (strain 287/91 / NCTC 13346).